Reading from the N-terminus, the 228-residue chain is MSVSEIFVELQGFLAAEQDIREEIRKVVQSLEQTAREILTLLQGVHQGTGFQDIPKRCLKAREHFGTVKTHLTSLKTKFPAEQYYRFHEHWRFVLQRLVFLAAFVVYLETETLVTREAVTEILGIEPDREKGFHLDVEDYLSGVLILASELSRLSVNSVTAGDYSRPLHISTFINELDSGFRLLNLKNDSLRKRYDGLKYDVKKVEEVVYDLSIRGFNKETAAACGEK.

Positions 86-90 (RFHEH) are DNA/RNA binding. The leucine-zipper stretch occupies residues 177 to 198 (LDSGFRLLNLKNDSLRKRYDGL). Lysine 187 carries the post-translational modification N6-acetyllysine. Position 190 is a phosphoserine (serine 190). Lysine 199 carries the N6-acetyllysine modification.

It belongs to the translin family. As to quaternary structure, ring-shaped heterooctamer of six TSN and two TSNAX subunits, DNA/RNA binding occurs inside the ring.

Its subcellular location is the cytoplasm. It localises to the nucleus. In terms of biological role, DNA-binding protein that specifically recognizes consensus sequences at the breakpoint junctions in chromosomal translocations, mostly involving immunoglobulin (Ig)/T-cell receptor gene segments. Seems to recognize single-stranded DNA ends generated by staggered breaks occurring at recombination hot spots. Functionally, exhibits both single-stranded and double-stranded endoribonuclease activity. May act as an activator of RNA-induced silencing complex (RISC) by facilitating endonucleolytic cleavage of the siRNA passenger strand. This is Translin (TSN) from Cricetulus griseus (Chinese hamster).